A 634-amino-acid polypeptide reads, in one-letter code: Pescadillo homolog (634 aa).

Positions Arg321 to Met414 constitute a BRCT domain. Disordered regions lie at residues Glu437–Glu473, Glu491–Glu561, and Asn603–Ala634. Ser453 carries the phosphoserine modification. Acidic residues-rich tracts occupy residues Asp454–Glu473 and Val501–Gln527. 2 coiled-coil regions span residues Ser460 to Ser546 and Leu596 to Lys629. Composition is skewed to basic and acidic residues over residues Leu528–Lys548 and Asn603–Ala623. Residues Ala624 to Ala634 show a composition bias toward low complexity.

This sequence belongs to the pescadillo family.

It localises to the nucleus. Its subcellular location is the nucleolus. The protein localises to the nucleoplasm. Its function is as follows. Required for maturation of ribosomal RNAs and formation of the large ribosomal subunit. This is Pescadillo homolog from Drosophila willistoni (Fruit fly).